Reading from the N-terminus, the 571-residue chain is Cytochrome P450 monooxygenase g430 (571 aa).

A helical transmembrane segment spans residues glycine 8–isoleucine 28. Cysteine 471 contacts heme. Residues cysteine 552–serine 571 form a disordered region.

It belongs to the cytochrome P450 family. Requires heme as cofactor.

It localises to the membrane. It functions in the pathway mycotoxin biosynthesis. In terms of biological role, cytochrome P450 monooxygenase; part of the gene cluster that mediates the biosynthesis of 1233A, a natural compound known as an inhibitor of HMG-CoA synthase in the mevalonate pathway and with antibacterial and antifungal activities. The highly reducing polyketide synthase g433 is responsible for the 1233A backbone biosynthesis and the cytochrome P450 monooxygenase g430 catalyzes oxidation of the backbone. The chain is Cytochrome P450 monooxygenase g430 from Fusarium sp.